The following is a 585-amino-acid chain: Glutathione S-transferase C-terminal domain-containing protein homolog (585 aa).

Residues 120 to 275 (LGFKGSCLLA…DKCARVLRDL (156 aa)) enclose the GST C-terminal domain.

It belongs to the GSTCD family.

The sequence is that of Glutathione S-transferase C-terminal domain-containing protein homolog from Drosophila melanogaster (Fruit fly).